A 260-amino-acid chain; its full sequence is Snake venom serine protease KN6 (260 aa).

The first 18 residues, 1 to 18 (MVLIRVLANLLILQLSYA), serve as a signal peptide directing secretion. Positions 19–24 (QKSSEL) are excised as a propeptide. Positions 25-251 (VIGGDECNIN…HLDWIQSIIA (227 aa)) constitute a Peptidase S1 domain. Disulfide bonds link C31–C165, C100–C258, C144–C212, C176–C191, and C202–C227. H67 serves as the catalytic Charge relay system. N-linked (GlcNAc...) asparagine glycosylation occurs at N105. D112 serves as the catalytic Charge relay system. N172 is a glycosylation site (N-linked (GlcNAc...) asparagine). The Charge relay system role is filled by S206. N-linked (GlcNAc...) asparagine glycans are attached at residues N213 and N255.

Belongs to the peptidase S1 family. Snake venom subfamily. As to quaternary structure, monomer. Expressed by the venom gland.

It localises to the secreted. Its function is as follows. Snake venom serine protease that may act in the hemostasis system of the prey. The polypeptide is Snake venom serine protease KN6 (Trimeresurus stejnegeri (Chinese green tree viper)).